A 502-amino-acid chain; its full sequence is Probable mRNA-splicing protein ubp10 (502 aa).

The UBP-type; degenerate zinc-finger motif lies at 56–153; that stretch reads SQNLYLDTIN…YVMRPTFTKL (98 aa). Zn(2+) contacts are provided by Cys89, Cys92, His108, and His114. The USP domain occupies 178–501; it reads VGMNNIKNND…ESFIQLWERS (324 aa).

Belongs to the peptidase C19 family.

Its subcellular location is the nucleus. Its function is as follows. May play a role in mRNA splicing. It is unsure if the protein really exhibits hydrolase activity. Could be a competitor of ubiquitin C-terminal hydrolases (UCHs). The chain is Probable mRNA-splicing protein ubp10 (ubp10) from Schizosaccharomyces pombe (strain 972 / ATCC 24843) (Fission yeast).